An 88-amino-acid polypeptide reads, in one-letter code: Large ribosomal subunit protein bL27 (88 aa).

Positions 1–21 (MAHKKGASSSRNGRDSAAQRL) are disordered.

It belongs to the bacterial ribosomal protein bL27 family.

In Mycobacterium avium (strain 104), this protein is Large ribosomal subunit protein bL27.